A 441-amino-acid polypeptide reads, in one-letter code: Plasmepsin VI (441 aa).

Residues 1–7 (MTNFCIK) lie on the Cytoplasmic side of the membrane. A helical; Signal-anchor for type II membrane protein membrane pass occupies residues 8 to 28 (SYLFLYLSFLLFFDIITIFHV). At 29 to 441 (SSIRISTVLK…VGVVKSNHNF (413 aa)) the chain is on the extracellular side. The Peptidase A1 domain maps to 109-435 (FIGDIEIGNP…DNDHKLVGVV (327 aa)). Active-site residues include Asp127 and Asp324.

Belongs to the peptidase A1 family.

The protein localises to the membrane. Functionally, during the development in the mosquito midgut, plays a role in sporozoite egress from oocysts. This is Plasmepsin VI from Plasmodium berghei (strain Anka).